The sequence spans 210 residues: LexA repressor (210 aa).

The segment at residues 28-48 is a DNA-binding region (H-T-H motif); that stretch reads FEEIAEGMGLSSLATVHKHIG. Active-site for autocatalytic cleavage activity residues include Ser131 and Lys169.

It belongs to the peptidase S24 family. In terms of assembly, homodimer.

It catalyses the reaction Hydrolysis of Ala-|-Gly bond in repressor LexA.. Its function is as follows. Represses a number of genes involved in the response to DNA damage (SOS response), including recA and lexA. In the presence of single-stranded DNA, RecA interacts with LexA causing an autocatalytic cleavage which disrupts the DNA-binding part of LexA, leading to derepression of the SOS regulon and eventually DNA repair. The chain is LexA repressor from Koribacter versatilis (strain Ellin345).